The primary structure comprises 585 residues: Parathyroid hormone/parathyroid hormone-related peptide receptor (585 aa).

The signal sequence occupies residues 1-26; that stretch reads MGAARIAPGLALLLCCPVLSSAYALV. At 27–184 the chain is on the extracellular side; the sequence is DADDVMTKEE…REREVFDRLG (158 aa). Disulfide bonds link Cys-48-Cys-113, Cys-104-Cys-144, and Cys-127-Cys-166. Residues 66–100 are disordered; it reads DKGWASAPTSGKPRKEKASGKLYPESGEDTGSRHQ. Residues Asn-147, Asn-157, Asn-162, and Asn-172 are each glycosylated (N-linked (GlcNAc...) asparagine). A helical membrane pass occupies residues 185 to 208; it reads MIYTVGYSVSLASLTVAVLILAYF. Residues 209-215 are Cytoplasmic-facing; sequence RRLHCTR. A helical transmembrane segment spans residues 216–235; that stretch reads NYIHMHLFLSFMLRAVSIFV. The Extracellular portion of the chain corresponds to 236–277; it reads KDAVLYSGATLDEAERLTEEELRAIAQAPLPPVAATSYVGCR. Residues 278-301 form a helical membrane-spanning segment; it reads VAVTFFLYFLATNYYWILVEGLYL. The Cytoplasmic portion of the chain corresponds to 302 to 315; sequence HSLIFMAFFSEKKY. A helical membrane pass occupies residues 316-337; that stretch reads LWGFTVFGWGLPAIFVAVWVSV. The Extracellular portion of the chain corresponds to 338 to 356; the sequence is RATLANTGCWDLSSGNKKW. Residues 357 to 377 traverse the membrane as a helical segment; the sequence is IIQVPILASIVLNFILFINIV. Residues 378–404 are Cytoplasmic-facing; that stretch reads RVLATKLRETNAGRCDTRQQYRKLLKS. Residues 405–423 form a helical membrane-spanning segment; the sequence is TLVLMPLFGVHYIVFMATP. Over 424–435 the chain is Extracellular; it reads YTEVSGTLWQVQ. Residues 436-458 traverse the membrane as a helical segment; sequence MHYEMLFNSFQGFFVAIIYCFCN. At 459-585 the chain is on the cytoplasmic side; it reads GEVQAEIKKS…LLQEEWETVM (127 aa). The Important for interaction with G proteins signature appears at 469-472; that stretch reads WSRW. Thr-543 is subject to Phosphothreonine.

Belongs to the G-protein coupled receptor 2 family. In terms of assembly, homodimer in the absence of bound ligand. Peptide hormone binding leads to dissociation of the homodimer. In terms of processing, N-glycosylated.

Its subcellular location is the cell membrane. Functionally, G-protein-coupled receptor for parathyroid hormone (PTH) and for parathyroid hormone-related peptide (PTHLH). Ligand binding causes a conformation change that triggers signaling via guanine nucleotide-binding proteins (G proteins) and modulates the activity of downstream effectors, such as adenylate cyclase (cAMP). PTH1R is coupled to G(s) G alpha proteins and mediates activation of adenylate cyclase activity. PTHLH dissociates from PTH1R more rapidly than PTH; as consequence, the cAMP response induced by PTHLH decays faster than the response induced by PTH. In Sus scrofa (Pig), this protein is Parathyroid hormone/parathyroid hormone-related peptide receptor (PTH1R).